A 61-amino-acid chain; its full sequence is Small ribosomal subunit protein uS14 (61 aa).

Zn(2+) is bound by residues C24, C27, C40, and C43.

Belongs to the universal ribosomal protein uS14 family. Zinc-binding uS14 subfamily. As to quaternary structure, part of the 30S ribosomal subunit. Contacts proteins S3 and S10. Zn(2+) serves as cofactor.

In terms of biological role, binds 16S rRNA, required for the assembly of 30S particles and may also be responsible for determining the conformation of the 16S rRNA at the A site. The sequence is that of Small ribosomal subunit protein uS14 from Anoxybacillus flavithermus (strain DSM 21510 / WK1).